The sequence spans 93 residues: Large ribosomal subunit protein uL23 (93 aa).

This sequence belongs to the universal ribosomal protein uL23 family. Part of the 50S ribosomal subunit. Contacts protein L29, and trigger factor when it is bound to the ribosome.

One of the early assembly proteins it binds 23S rRNA. One of the proteins that surrounds the polypeptide exit tunnel on the outside of the ribosome. Forms the main docking site for trigger factor binding to the ribosome. This chain is Large ribosomal subunit protein uL23, found in Campylobacter hominis (strain ATCC BAA-381 / DSM 21671 / CCUG 45161 / LMG 19568 / NCTC 13146 / CH001A).